The chain runs to 351 residues: uncharacterized protein (351 aa).

Mn(2+)-binding residues include D215, D226, H290, E319, and E333.

Belongs to the peptidase M24B family. It depends on Mn(2+) as a cofactor.

This is an uncharacterized protein from Staphylococcus aureus (strain MRSA252).